The primary structure comprises 297 residues: Undecaprenyl-diphosphatase (297 aa).

A run of 7 helical transmembrane segments spans residues 39 to 59 (PGAA…LIYF), 85 to 105 (ARLA…GLTL), 113 to 133 (FRSL…LLVV), 151 to 171 (GILI…RSGT), 190 to 210 (SFLL…KHLL), 220 to 240 (ALWV…AWLL), and 249 to 269 (LVFV…LQTG).

It belongs to the UppP family.

The protein resides in the cell inner membrane. The enzyme catalyses di-trans,octa-cis-undecaprenyl diphosphate + H2O = di-trans,octa-cis-undecaprenyl phosphate + phosphate + H(+). Functionally, catalyzes the dephosphorylation of undecaprenyl diphosphate (UPP). Confers resistance to bacitracin. The sequence is that of Undecaprenyl-diphosphatase from Myxococcus xanthus (strain DK1622).